A 418-amino-acid chain; its full sequence is Putative ion-transport protein YfeO (418 aa).

12 helical membrane passes run 10 to 30 (LLLS…LIMV), 54 to 74 (DSPL…GLVI), 99 to 119 (ALPG…SLGP), 120 to 140 (EHPI…RLLP), 149 to 169 (ILAS…AALI), 186 to 206 (LFAP…FFHP), 223 to 243 (ILSG…AVWC), 258 to 278 (VFVL…GGPV), 300 to 320 (DYFL…ASGF), 322 to 342 (GGRI…LHEH), 343 to 363 (VPAV…VLVV), and 371 to 391 (LFMA…CIVM).

The protein belongs to the chloride channel (TC 2.A.49) family.

It is found in the cell membrane. The polypeptide is Putative ion-transport protein YfeO (Escherichia coli O127:H6 (strain E2348/69 / EPEC)).